The primary structure comprises 114 residues: MGCRLLCCAVLCLLGAVPMETGVTQTPRHLVMGMTNKKSLKCEQHLGHNAMYWYKQSAKKPLELMFVYNFKEQTENNSVPSRFSPECPNSSHLFLHLHTLQPEDSALYLCASSQ.

An N-terminal signal peptide occupies residues 1 to 21 (MGCRLLCCAVLCLLGAVPMET). One can recognise an Ig-like domain in the interval 22 to 114 (GVTQTPRHLV…SALYLCASSQ (93 aa)). A disulfide bond links C42 and C110. N-linked (GlcNAc...) asparagine glycosylation is found at N76 and N89.

As to quaternary structure, alpha-beta TR is a heterodimer composed of an alpha and beta chain; disulfide-linked. The alpha-beta TR is associated with the transmembrane signaling CD3 coreceptor proteins to form the TR-CD3 (TcR or TCR). The assembly of alpha-beta TR heterodimers with CD3 occurs in the endoplasmic reticulum where a single alpha-beta TR heterodimer associates with one CD3D-CD3E heterodimer, one CD3G-CD3E heterodimer and one CD247 homodimer forming a stable octameric structure. CD3D-CD3E and CD3G-CD3E heterodimers preferentially associate with TR alpha and TR beta chains, respectively. The association of the CD247 homodimer is the last step of TcR assembly in the endoplasmic reticulum and is required for transport to the cell surface.

Its subcellular location is the cell membrane. Functionally, v region of the variable domain of T cell receptor (TR) beta chain that participates in the antigen recognition. Alpha-beta T cell receptors are antigen specific receptors which are essential to the immune response and are present on the cell surface of T lymphocytes. Recognize peptide-major histocompatibility (MH) (pMH) complexes that are displayed by antigen presenting cells (APC), a prerequisite for efficient T cell adaptive immunity against pathogens. Binding of alpha-beta TR to pMH complex initiates TR-CD3 clustering on the cell surface and intracellular activation of LCK that phosphorylates the ITAM motifs of CD3G, CD3D, CD3E and CD247 enabling the recruitment of ZAP70. In turn ZAP70 phosphorylates LAT, which recruits numerous signaling molecules to form the LAT signalosome. The LAT signalosome propagates signal branching to three major signaling pathways, the calcium, the mitogen-activated protein kinase (MAPK) kinase and the nuclear factor NF-kappa-B (NF-kB) pathways, leading to the mobilization of transcription factors that are critical for gene expression and essential for T cell growth and differentiation. The T cell repertoire is generated in the thymus, by V-(D)-J rearrangement. This repertoire is then shaped by intrathymic selection events to generate a peripheral T cell pool of self-MH restricted, non-autoaggressive T cells. Post-thymic interaction of alpha-beta TR with the pMH complexes shapes TR structural and functional avidity. The protein is T cell receptor beta variable 4-2 of Homo sapiens (Human).